Consider the following 137-residue polypeptide: Cytochrome b5 (137 aa).

The Cytochrome b5 heme-binding domain occupies 6 to 82; the sequence is KKVYTLEEVA…MDEYYVGDID (77 aa). Heme is bound by residues histidine 41 and histidine 65. A helical transmembrane segment spans residues 108 to 128; it reads FIIKILQFLVPLAILGLAVAI.

This sequence belongs to the cytochrome b5 family.

The protein localises to the endoplasmic reticulum membrane. Its subcellular location is the microsome membrane. Its function is as follows. Membrane bound hemoprotein which function as an electron carrier for several membrane bound oxygenases. The chain is Cytochrome b5 from Oryza sativa subsp. japonica (Rice).